The primary structure comprises 108 residues: Protein YcgL (108 aa).

One can recognise a YcgL domain in the interval 12-96 (MFCVIYRSSK…PPEDLLKQHL (85 aa)).

This is Protein YcgL from Escherichia coli O9:H4 (strain HS).